Reading from the N-terminus, the 308-residue chain is 4-hydroxy-tetrahydrodipicolinate synthase (308 aa).

T56 serves as a coordination point for pyruvate. Y144 functions as the Proton donor/acceptor in the catalytic mechanism. The Schiff-base intermediate with substrate role is filled by K172. Pyruvate is bound at residue V212.

This sequence belongs to the DapA family. Homotetramer; dimer of dimers.

It localises to the cytoplasm. It carries out the reaction L-aspartate 4-semialdehyde + pyruvate = (2S,4S)-4-hydroxy-2,3,4,5-tetrahydrodipicolinate + H2O + H(+). It functions in the pathway amino-acid biosynthesis; L-lysine biosynthesis via DAP pathway; (S)-tetrahydrodipicolinate from L-aspartate: step 3/4. Its function is as follows. Catalyzes the condensation of (S)-aspartate-beta-semialdehyde [(S)-ASA] and pyruvate to 4-hydroxy-tetrahydrodipicolinate (HTPA). This is 4-hydroxy-tetrahydrodipicolinate synthase from Kineococcus radiotolerans (strain ATCC BAA-149 / DSM 14245 / SRS30216).